Reading from the N-terminus, the 122-residue chain is NADPH-dependent 7-cyano-7-deazaguanine reductase (122 aa).

The Thioimide intermediate role is filled by C34. D41 acts as the Proton donor in catalysis. Substrate is bound by residues 56 to 58 and 75 to 76; these read VEL and HE.

Belongs to the GTP cyclohydrolase I family. QueF type 1 subfamily.

The protein localises to the cytoplasm. The enzyme catalyses 7-aminomethyl-7-carbaguanine + 2 NADP(+) = 7-cyano-7-deazaguanine + 2 NADPH + 3 H(+). It participates in tRNA modification; tRNA-queuosine biosynthesis. In terms of biological role, catalyzes the NADPH-dependent reduction of 7-cyano-7-deazaguanine (preQ0) to 7-aminomethyl-7-deazaguanine (preQ1). The protein is NADPH-dependent 7-cyano-7-deazaguanine reductase of Anaeromyxobacter dehalogenans (strain 2CP-C).